The primary structure comprises 152 residues: Deoxyuridine 5'-triphosphate nucleotidohydrolase (152 aa).

Residues 71–73 (RSG), N84, 88–90 (LID), and M98 each bind substrate.

Belongs to the dUTPase family. It depends on Mg(2+) as a cofactor.

The enzyme catalyses dUTP + H2O = dUMP + diphosphate + H(+). It participates in pyrimidine metabolism; dUMP biosynthesis; dUMP from dCTP (dUTP route): step 2/2. In terms of biological role, this enzyme is involved in nucleotide metabolism: it produces dUMP, the immediate precursor of thymidine nucleotides and it decreases the intracellular concentration of dUTP so that uracil cannot be incorporated into DNA. The chain is Deoxyuridine 5'-triphosphate nucleotidohydrolase from Enterobacter sp. (strain 638).